Reading from the N-terminus, the 352-residue chain is Ion-translocating oxidoreductase complex subunit D (352 aa).

The next 5 membrane-spanning stretches (helical) occupy residues 20–40 (IMLL…WFFG), 42–62 (GTLV…ALVL), 78–109 (ALLT…VIIA), 123–143 (PAMI…TSWL), and 148–168 (IAVN…GHTA). T187 carries the post-translational modification FMN phosphoryl threonine. The next 5 membrane-spanning stretches (helical) occupy residues 214-234 (ILAG…GVWL), 242-262 (WHIP…GWLF), 267-287 (LAAP…FFIL), 301-321 (LIFG…GGYP), and 322-342 (DGVA…DYYT).

The protein belongs to the NqrB/RnfD family. The complex is composed of six subunits: RsxA, RsxB, RsxC, RsxD, RsxE and RsxG. It depends on FMN as a cofactor.

The protein resides in the cell inner membrane. Part of a membrane-bound complex that couples electron transfer with translocation of ions across the membrane. Required to maintain the reduced state of SoxR. Probably transfers electron from NAD(P)H to SoxR. This Escherichia coli (strain K12) protein is Ion-translocating oxidoreductase complex subunit D.